We begin with the raw amino-acid sequence, 263 residues long: Thiazole synthase (263 aa).

Lys102 (schiff-base intermediate with DXP) is an active-site residue. 1-deoxy-D-xylulose 5-phosphate is bound by residues Gly164, 190-191, and 212-213; these read AG and NT.

The protein belongs to the ThiG family. As to quaternary structure, homotetramer. Forms heterodimers with either ThiH or ThiS.

Its subcellular location is the cytoplasm. It carries out the reaction [ThiS sulfur-carrier protein]-C-terminal-Gly-aminoethanethioate + 2-iminoacetate + 1-deoxy-D-xylulose 5-phosphate = [ThiS sulfur-carrier protein]-C-terminal Gly-Gly + 2-[(2R,5Z)-2-carboxy-4-methylthiazol-5(2H)-ylidene]ethyl phosphate + 2 H2O + H(+). Its pathway is cofactor biosynthesis; thiamine diphosphate biosynthesis. Functionally, catalyzes the rearrangement of 1-deoxy-D-xylulose 5-phosphate (DXP) to produce the thiazole phosphate moiety of thiamine. Sulfur is provided by the thiocarboxylate moiety of the carrier protein ThiS. In vitro, sulfur can be provided by H(2)S. The sequence is that of Thiazole synthase from Helicobacter hepaticus (strain ATCC 51449 / 3B1).